The chain runs to 103 residues: 6-pyruvoyl tetrahydrobiopterin synthase (103 aa).

N-acetylalanine is present on A1. Residue H27 participates in Zn(2+) binding. Residues H53 and E92 each act as charge relay system in the active site.

The protein belongs to the PTPS family. Homohexamer formed of two homotrimers in a head to head fashion. Requires Zn(2+) as cofactor.

The catalysed reaction is 7,8-dihydroneopterin 3'-triphosphate = 6-pyruvoyl-5,6,7,8-tetrahydropterin + triphosphate + H(+). The protein operates within cofactor biosynthesis; tetrahydrobiopterin biosynthesis; tetrahydrobiopterin from 7,8-dihydroneopterin triphosphate: step 1/3. Its function is as follows. Involved in the biosynthesis of tetrahydrobiopterin, an essential cofactor of aromatic amino acid hydroxylases. Catalyzes the transformation of 7,8-dihydroneopterin triphosphate into 6-pyruvoyl tetrahydropterin. This Salmo salar (Atlantic salmon) protein is 6-pyruvoyl tetrahydrobiopterin synthase (pts).